The primary structure comprises 323 residues: Polycomb complex protein BMI-1-B (323 aa).

An RING-type zinc finger spans residues 18 to 57; the sequence is CVLCGGYFIDAATIIECLHSFCKTCIVRYLETSKYCPICD. Residues 81–95 carry the Nuclear localization signal motif; the sequence is KLVPGLFKGEMKRRR. The disordered stretch occupies residues 238-310; it reads PHTDRINNTS…HQNPFANRAR (73 aa). Positions 287–301 are enriched in low complexity; that stretch reads HISSTINGTNSSSSH.

As to quaternary structure, component of a PRC1-like complex. Interacts with cbx4.

Its subcellular location is the nucleus. Component of a Polycomb group (PcG) multiprotein PRC1-like complex, a complex class required to maintain the transcriptionally repressive state of many genes, including Hox genes, throughout development. PcG PRC1 complex acts via chromatin remodeling and modification of histones; it mediates monoubiquitination of histone H2A 'Lys-119', rendering chromatin heritably changed in its expressibility. In the PRC1 complex, it is required to stimulate the E3 ubiquitin-protein ligase activity of rnf2. This chain is Polycomb complex protein BMI-1-B (bmi1b), found in Xenopus laevis (African clawed frog).